A 285-amino-acid chain; its full sequence is Bifunctional protein FolD (285 aa).

Residues 165–167 (GRS) and Ser-190 each bind NADP(+).

It belongs to the tetrahydrofolate dehydrogenase/cyclohydrolase family. Homodimer.

It catalyses the reaction (6R)-5,10-methylene-5,6,7,8-tetrahydrofolate + NADP(+) = (6R)-5,10-methenyltetrahydrofolate + NADPH. The catalysed reaction is (6R)-5,10-methenyltetrahydrofolate + H2O = (6R)-10-formyltetrahydrofolate + H(+). It participates in one-carbon metabolism; tetrahydrofolate interconversion. Its function is as follows. Catalyzes the oxidation of 5,10-methylenetetrahydrofolate to 5,10-methenyltetrahydrofolate and then the hydrolysis of 5,10-methenyltetrahydrofolate to 10-formyltetrahydrofolate. In Burkholderia multivorans (strain ATCC 17616 / 249), this protein is Bifunctional protein FolD.